The chain runs to 348 residues: 4-hydroxyphenylpyruvate dioxygenase (348 aa).

2 VOC domains span residues 11 to 141 (GFAF…ITSS) and 151 to 303 (AIDH…IFTE). The Fe cation site is built by His-154, His-232, and Glu-312.

It belongs to the 4HPPD family. Fe cation is required as a cofactor.

The enzyme catalyses 3-(4-hydroxyphenyl)pyruvate + O2 = homogentisate + CO2. Functionally, catalyzes the transformation of p-hydroxyphenylpyruvate into HGA. Has hemolytic and brown pigment production activity. The chain is 4-hydroxyphenylpyruvate dioxygenase (lly) from Legionella pneumophila (strain Corby).